Consider the following 778-residue polypeptide: Preasperterpenoid A synthase PvPS (778 aa).

Positions 1–414 are terpene cyclase; the sequence is MAATKKSTAT…HRYNFHKPAA (414 aa). Mg(2+) is bound by residues Asp176 and Asp180. Asp176 lines the substrate pocket. Positions 176 to 180 match the DDXXD 1 motif; that stretch reads DDILD. Substrate is bound by residues 266-269, Asn310, 314-318, and 406-407; these read RVIN, SWEKE, and RY. The short motif at 310–318 is the NSE/DTE element; it reads NDYFSWEKE. Positions 414–431 are enriched in basic and acidic residues; it reads AKENEDTDDEGAKSDDSK. The tract at residues 415–778 is prenyltransferase; sequence KENEDTDDEG…LRLLLKRLQV (364 aa). Residues 416–454 are disordered; it reads ENEDTDDEGAKSDDSKTTLNDSTDSTVVDVKTPATSGLL. Residues Lys499, Arg502, and His531 each contribute to the isopentenyl diphosphate site. Residues Asp538 and Asp542 each coordinate Mg(2+). The DDXXD 2 motif lies at 538–542; the sequence is DDIED. Arg547 is a binding site for dimethylallyl diphosphate. Arg548 contacts isopentenyl diphosphate. Lys625, Thr626, Gln662, Asn669, Lys679, and Lys689 together coordinate dimethylallyl diphosphate.

In the N-terminal section; belongs to the terpene synthase family. It in the C-terminal section; belongs to the FPP/GGPP synthase family. Hexamer. Mg(2+) serves as cofactor.

It carries out the reaction isopentenyl diphosphate + (2E,6E)-farnesyl diphosphate = (2E,6E,10E)-geranylgeranyl diphosphate + diphosphate. The enzyme catalyses isopentenyl diphosphate + (2E,6E,10E)-geranylgeranyl diphosphate = (2E,6E,10E,14E)-geranylfarnesyl diphosphate + diphosphate. It catalyses the reaction (2E,6E,10E,14E)-geranylfarnesyl diphosphate = preasperterpenoid A + diphosphate. The protein operates within secondary metabolite biosynthesis; terpenoid biosynthesis. Its function is as follows. Bifunctional sesterterpene synthase that possesses both prenyl transferase and terpene cyclase activity, converting isopentenyl diphosphate and dimethylallyl diphosphate into geranylfarnesyl diphosphate (GFPP) and further converting GFPP into preasperterpenoid A. The protein is Preasperterpenoid A synthase PvPS of Talaromyces verruculosus (Penicillium verruculosum).